Reading from the N-terminus, the 146-residue chain is 3-hydroxyacyl-[acyl-carrier-protein] dehydratase FabZ (146 aa).

H49 is an active-site residue.

This sequence belongs to the thioester dehydratase family. FabZ subfamily.

The protein resides in the cytoplasm. The enzyme catalyses a (3R)-hydroxyacyl-[ACP] = a (2E)-enoyl-[ACP] + H2O. Functionally, involved in unsaturated fatty acids biosynthesis. Catalyzes the dehydration of short chain beta-hydroxyacyl-ACPs and long chain saturated and unsaturated beta-hydroxyacyl-ACPs. The polypeptide is 3-hydroxyacyl-[acyl-carrier-protein] dehydratase FabZ (Ectopseudomonas mendocina (strain ymp) (Pseudomonas mendocina)).